The sequence spans 729 residues: Fatty acid oxidation complex subunit alpha (729 aa).

Positions 1–189 are enoyl-CoA hydratase/isomerase; the sequence is MLYKGDTLYL…KIGLVDGVVK (189 aa). Aspartate 296 is a substrate binding site. Positions 311–729 are 3-hydroxyacyl-CoA dehydrogenase; it reads ETPKQAAVLG…ARPVGDLKTA (419 aa). NAD(+) contacts are provided by residues methionine 324, aspartate 343, 400–402, lysine 407, and serine 429; that span reads VVE. Histidine 450 serves as the catalytic For 3-hydroxyacyl-CoA dehydrogenase activity. Asparagine 453 is an NAD(+) binding site. Positions 500 and 660 each coordinate substrate. Residues 708–729 form a disordered region; the sequence is RHNEPYYPPVEPARPVGDLKTA.

This sequence in the N-terminal section; belongs to the enoyl-CoA hydratase/isomerase family. In the C-terminal section; belongs to the 3-hydroxyacyl-CoA dehydrogenase family. As to quaternary structure, heterotetramer of two alpha chains (FadB) and two beta chains (FadA).

It carries out the reaction a (3S)-3-hydroxyacyl-CoA + NAD(+) = a 3-oxoacyl-CoA + NADH + H(+). The enzyme catalyses a (3S)-3-hydroxyacyl-CoA = a (2E)-enoyl-CoA + H2O. It catalyses the reaction a 4-saturated-(3S)-3-hydroxyacyl-CoA = a (3E)-enoyl-CoA + H2O. The catalysed reaction is (3S)-3-hydroxybutanoyl-CoA = (3R)-3-hydroxybutanoyl-CoA. It carries out the reaction a (3Z)-enoyl-CoA = a 4-saturated (2E)-enoyl-CoA. The enzyme catalyses a (3E)-enoyl-CoA = a 4-saturated (2E)-enoyl-CoA. Its pathway is lipid metabolism; fatty acid beta-oxidation. Involved in the aerobic and anaerobic degradation of long-chain fatty acids via beta-oxidation cycle. Catalyzes the formation of 3-oxoacyl-CoA from enoyl-CoA via L-3-hydroxyacyl-CoA. It can also use D-3-hydroxyacyl-CoA and cis-3-enoyl-CoA as substrate. This Escherichia coli O6:H1 (strain CFT073 / ATCC 700928 / UPEC) protein is Fatty acid oxidation complex subunit alpha.